We begin with the raw amino-acid sequence, 657 residues long: Glycogen debranching enzyme (657 aa).

Asp336 (nucleophile) is an active-site residue. Catalysis depends on Glu371, which acts as the Proton donor. The tract at residues 460-479 (ANGEENRDGTNNNYSNNHGK) is disordered.

Belongs to the glycosyl hydrolase 13 family.

The catalysed reaction is Hydrolysis of (1-&gt;6)-alpha-D-glucosidic linkages to branches with degrees of polymerization of three or four glucose residues in limit dextrin.. It participates in glycan degradation; glycogen degradation. Functionally, removes maltotriose and maltotetraose chains that are attached by 1,6-alpha-linkage to the limit dextrin main chain, generating a debranched limit dextrin. This chain is Glycogen debranching enzyme, found in Escherichia coli O127:H6 (strain E2348/69 / EPEC).